We begin with the raw amino-acid sequence, 404 residues long: FPYQGSSIMLESGKVNDYEVVYPQRLAPLPEGAVQQKYEDTMQYEFKVNGETIGLHMEKSKGLFSKDYSETHYSPDGRKITTYPSVEDHCYYHGRIENYEDSTASISACNGLKGHFKIQGETYFIESLKLSDSEAHAVFKYENVEKEDETHKMCGVTQNWKSYDPIKKPSWVNLTPKQQTWPQTSVNLQLVVDRSMYAKYNSDSEKITQTLQERVNIMKEIFKPLNLDITLSVIEMWDKKDLITVKTAATDTLKLFPKWRQTDLLKRIDNDNAQLQTAVDFDGETVGLAFKGTMCDKRYSAGIIQDHSAIPLLMAVTMAHELGHNLGMDHDDTYKCNCNVCIMPPRLNTNPSKTFSDCSNNDYQKFLTDKKPKCIHKKSLKTDTVSTSVSGNEPLDDNVDGFHA.

Positions F1–S6 are cleaved as a signal peptide. The propeptide occupies S7–K177. In terms of domain architecture, Peptidase M12B spans T184–S379. Intrachain disulfides connect C295–C374, C336–C358, and C338–C341. Position 320 (H320) interacts with Zn(2+). The active site involves E321. Zn(2+) contacts are provided by H324 and H330. The propeptide occupies S379–A404. A disordered region spans residues V385–A404. Residues P394–A404 are compositionally biased toward acidic residues.

As to quaternary structure, monomer. The cofactor is Zn(2+). As to expression, expressed by the venom gland.

It is found in the secreted. Its function is as follows. This probable venom zinc protease is not hemorrhagic when 3 ug are injected onto the back skin of guinea pig. The chain is Snake venom metalloproteinase H5 from Deinagkistrodon acutus (Hundred-pace snake).